Reading from the N-terminus, the 106-residue chain is Large ribosomal subunit protein bL21 (106 aa).

It belongs to the bacterial ribosomal protein bL21 family. In terms of assembly, part of the 50S ribosomal subunit. Contacts protein L20.

Functionally, this protein binds to 23S rRNA in the presence of protein L20. The protein is Large ribosomal subunit protein bL21 of Chlamydia abortus (strain DSM 27085 / S26/3) (Chlamydophila abortus).